The following is a 294-amino-acid chain: Large ribosomal subunit protein uL18 (294 aa).

A disordered region spans residues 247 to 275; sequence RADPSPSAKKAAKPSKRHTAKRLTYDERK. Basic residues predominate over residues 256-267; that stretch reads KAAKPSKRHTAK.

The protein belongs to the universal ribosomal protein uL18 family. In terms of assembly, component of the large ribosomal subunit (LSU).

The protein resides in the cytoplasm. It is found in the nucleus. Its function is as follows. Component of the ribosome, a large ribonucleoprotein complex responsible for the synthesis of proteins in the cell. The small ribosomal subunit (SSU) binds messenger RNAs (mRNAs) and translates the encoded message by selecting cognate aminoacyl-transfer RNA (tRNA) molecules. The large subunit (LSU) contains the ribosomal catalytic site termed the peptidyl transferase center (PTC), which catalyzes the formation of peptide bonds, thereby polymerizing the amino acids delivered by tRNAs into a polypeptide chain. The nascent polypeptides leave the ribosome through a tunnel in the LSU and interact with protein factors that function in enzymatic processing, targeting, and the membrane insertion of nascent chains at the exit of the ribosomal tunnel. The polypeptide is Large ribosomal subunit protein uL18 (rpl-5) (Caenorhabditis briggsae).